The primary structure comprises 190 residues: Somatotropin (190 aa).

H19 serves as a coordination point for Zn(2+). A disulfide bond links C52 and C163. E172 provides a ligand contact to Zn(2+). A disulfide bridge connects residues C180 and C188.

It belongs to the somatotropin/prolactin family.

The protein resides in the secreted. Growth hormone plays an important role in growth control and involved in the regulation of several anabolic processes. This Crocodylus novaeguineae (Crocodile) protein is Somatotropin (GH).